A 289-amino-acid chain; its full sequence is Myoblast determination protein 1 homolog A (289 aa).

The bHLH domain maps to 95 to 146 (DRRKAATMRERRRLSKVNEAFETLKRYTSTNPNQRLPKVEILRNAIRYIESL). The tract at residues 165-212 (SGDSDASSPRSNCSDGMMDYNSPPCGSRRRNSYDSSFYSDSPNDSRLG) is disordered. Polar residues-rich tracts occupy residues 168–178 (SDASSPRSNCS) and 197–208 (YDSSFYSDSPND).

Efficient DNA binding requires dimerization with another bHLH protein.

It is found in the nucleus. Functionally, may act as a transcriptional activator that promotes transcription of muscle-specific target genes and plays a role in muscle differentiation. This chain is Myoblast determination protein 1 homolog A (myod1-a), found in Xenopus laevis (African clawed frog).